Consider the following 86-residue polypeptide: Small ribosomal subunit protein uS17 (86 aa).

The protein belongs to the universal ribosomal protein uS17 family. Part of the 30S ribosomal subunit.

In terms of biological role, one of the primary rRNA binding proteins, it binds specifically to the 5'-end of 16S ribosomal RNA. This chain is Small ribosomal subunit protein uS17, found in Lactococcus lactis subsp. cremoris (strain SK11).